A 43-amino-acid chain; its full sequence is B melanoma antigen 1 (43 aa).

Residues 1–17 (MAARAVFLALSAQLLQA) form the signal peptide.

The protein belongs to the BAGE family. Not expressed in normal tissues, except in testis. Expressed with significant proportion in melanomas, but also in tumors of various histological origins, such as bladder carcinomas, head and neck squamous cell carcinomas, lung and breast carcinomas. Not expressed in renal, colorectal and prostatic carcinomas, leukemias and lymphomas. More frequently expressed in metastatic melanomas than in primary melanomas.

It localises to the secreted. In terms of biological role, unknown. Antigen recognized on a melanoma by autologous cytolytic T-lymphocytes. The protein is B melanoma antigen 1 (BAGE) of Homo sapiens (Human).